Here is a 456-residue protein sequence, read N- to C-terminus: UDP-N-acetylmuramoylalanine--D-glutamate ligase (456 aa).

122–128 (GSNGKST) lines the ATP pocket.

The protein belongs to the MurCDEF family.

The protein localises to the cytoplasm. The enzyme catalyses UDP-N-acetyl-alpha-D-muramoyl-L-alanine + D-glutamate + ATP = UDP-N-acetyl-alpha-D-muramoyl-L-alanyl-D-glutamate + ADP + phosphate + H(+). It functions in the pathway cell wall biogenesis; peptidoglycan biosynthesis. Its function is as follows. Cell wall formation. Catalyzes the addition of glutamate to the nucleotide precursor UDP-N-acetylmuramoyl-L-alanine (UMA). This Saccharophagus degradans (strain 2-40 / ATCC 43961 / DSM 17024) protein is UDP-N-acetylmuramoylalanine--D-glutamate ligase.